Consider the following 127-residue polypeptide: Large ribosomal subunit protein bL12 (127 aa).

Belongs to the bacterial ribosomal protein bL12 family. As to quaternary structure, homodimer. Part of the ribosomal stalk of the 50S ribosomal subunit. Forms a multimeric L10(L12)X complex, where L10 forms an elongated spine to which 2 to 4 L12 dimers bind in a sequential fashion. Binds GTP-bound translation factors.

Functionally, forms part of the ribosomal stalk which helps the ribosome interact with GTP-bound translation factors. Is thus essential for accurate translation. The chain is Large ribosomal subunit protein bL12 from Bordetella bronchiseptica (strain ATCC BAA-588 / NCTC 13252 / RB50) (Alcaligenes bronchisepticus).